A 70-amino-acid chain; its full sequence is Cold shock-like protein CspG (70 aa).

A CSD domain is found at 7-67 (GLVKWFNADK…GQRGPAAANV (61 aa)).

It localises to the cytoplasm. The protein is Cold shock-like protein CspG (cspG) of Escherichia coli O157:H7.